The following is a 489-amino-acid chain: Beta-galactosidase (489 aa).

The residue at position 116 (K116) is an N6-methyllysine; partial. K135 carries the N6-methyllysine modification. E206 (proton donor) is an active-site residue. An N6-methyllysine; partial mark is found at K273 and K311. At K332 the chain carries N6-methyllysine. E387 serves as the catalytic Nucleophile.

Homotetramer.

The catalysed reaction is Hydrolysis of terminal non-reducing beta-D-galactose residues in beta-D-galactosides.. The sequence is that of Beta-galactosidase (lacS) from Saccharolobus solfataricus (strain ATCC 35092 / DSM 1617 / JCM 11322 / P2) (Sulfolobus solfataricus).